The primary structure comprises 225 residues: Lipid A 4'-phosphatase (225 aa).

The next 6 membrane-spanning stretches (helical) occupy residues 29 to 49 (SAFT…YILL), 51 to 71 (NFHW…ITFA), 110 to 130 (FGFP…LICL), 136 to 156 (LSIF…YLGL), 160 to 180 (GDLV…YFIA), and 203 to 223 (TEVM…YSIV).

This sequence belongs to the lipid A LpxF 4'-phosphatase family.

It localises to the cell inner membrane. It participates in bacterial outer membrane biogenesis; LPS lipid A biosynthesis. Probably removes the 4'-phosphate group from lipid A. Removal of this phosphate group confers resistance to cationic antimicrobial peptides (CAMPs), inflammation-associated peptides produced by the human host. This LPS modification helps maintain the stability of this commensal bacterium in gut microbiota. The sequence is that of Lipid A 4'-phosphatase from Bacteroides thetaiotaomicron (strain ATCC 29148 / DSM 2079 / JCM 5827 / CCUG 10774 / NCTC 10582 / VPI-5482 / E50).